The primary structure comprises 422 residues: Histidine--tRNA ligase (422 aa).

The protein belongs to the class-II aminoacyl-tRNA synthetase family. In terms of assembly, homodimer.

Its subcellular location is the cytoplasm. It catalyses the reaction tRNA(His) + L-histidine + ATP = L-histidyl-tRNA(His) + AMP + diphosphate + H(+). This Syntrophomonas wolfei subsp. wolfei (strain DSM 2245B / Goettingen) protein is Histidine--tRNA ligase.